The chain runs to 160 residues: Protein shisa-like-2B (160 aa).

Residues 65–85 traverse the membrane as a helical segment; sequence IGALIGLGIAALVLLAFVISV.

This sequence belongs to the shisa family.

The protein resides in the membrane. In Homo sapiens (Human), this protein is Protein shisa-like-2B.